The primary structure comprises 281 residues: Hydroxyethylthiazole kinase (281 aa).

Residues Arg-124 and Ser-169 each coordinate ATP.

The protein belongs to the Thz kinase family. The cofactor is Mg(2+).

The catalysed reaction is 5-(2-hydroxyethyl)-4-methylthiazole + ATP = 4-methyl-5-(2-phosphooxyethyl)-thiazole + ADP + H(+). It participates in cofactor biosynthesis; thiamine diphosphate biosynthesis; 4-methyl-5-(2-phosphoethyl)-thiazole from 5-(2-hydroxyethyl)-4-methylthiazole: step 1/1. Its function is as follows. Catalyzes the phosphorylation of the hydroxyl group of 4-methyl-5-beta-hydroxyethylthiazole (THZ). This Rhodococcus erythropolis (strain PR4 / NBRC 100887) protein is Hydroxyethylthiazole kinase.